The primary structure comprises 422 residues: UDP-N-acetylglucosamine 1-carboxyvinyltransferase (422 aa).

Residue 22 to 23 coordinates phosphoenolpyruvate; that stretch reads KN. A UDP-N-acetyl-alpha-D-glucosamine-binding site is contributed by Arg-92. The active-site Proton donor is Cys-116. 2-(S-cysteinyl)pyruvic acid O-phosphothioketal is present on Cys-116. UDP-N-acetyl-alpha-D-glucosamine contacts are provided by residues 121–125, Asp-307, and Ile-329; that span reads RPVDQ.

This sequence belongs to the EPSP synthase family. MurA subfamily.

The protein resides in the cytoplasm. It carries out the reaction phosphoenolpyruvate + UDP-N-acetyl-alpha-D-glucosamine = UDP-N-acetyl-3-O-(1-carboxyvinyl)-alpha-D-glucosamine + phosphate. Its pathway is cell wall biogenesis; peptidoglycan biosynthesis. In terms of biological role, cell wall formation. Adds enolpyruvyl to UDP-N-acetylglucosamine. The chain is UDP-N-acetylglucosamine 1-carboxyvinyltransferase from Psychrobacter arcticus (strain DSM 17307 / VKM B-2377 / 273-4).